Here is a 215-residue protein sequence, read N- to C-terminus: Probable GTP-binding protein EngB (215 aa).

The EngB-type G domain occupies 31–215 (GPPEIAFAGR…RTAILQAVVQ (185 aa)). GTP contacts are provided by residues 39–46 (GRSNVGKS), 66–70 (GRTQE), 93–96 (DMPG), 160–163 (TKSD), and 194–196 (TSA). 2 residues coordinate Mg(2+): Ser46 and Thr68.

The protein belongs to the TRAFAC class TrmE-Era-EngA-EngB-Septin-like GTPase superfamily. EngB GTPase family. Mg(2+) serves as cofactor.

Necessary for normal cell division and for the maintenance of normal septation. The protein is Probable GTP-binding protein EngB of Bartonella bacilliformis (strain ATCC 35685 / KC583 / Herrer 020/F12,63).